The sequence spans 1058 residues: Carbamoyl phosphate synthase large chain (1058 aa).

Residues 1-401 form a carboxyphosphate synthetic domain region; it reads MPKRKDIQKI…SLLKACRSLE (401 aa). Residues Arg-129, Arg-169, Gly-175, Gly-176, Arg-208, Ile-210, Glu-215, Gly-241, Ile-242, His-243, Gln-284, and Glu-298 each contribute to the ATP site. Residues 133 to 327 enclose the ATP-grasp 1 domain; that stretch reads KQLMQELDQP…IAKLAAKIAV (195 aa). Residues Gln-284, Glu-298, and Asn-300 each coordinate Mg(2+). 3 residues coordinate Mn(2+): Gln-284, Glu-298, and Asn-300. The oligomerization domain stretch occupies residues 402–546; sequence IGVCHNEMTS…YSTYELENES (145 aa). The carbamoyl phosphate synthetic domain stretch occupies residues 547–929; the sequence is VQSNKESILV…ALYKAFEANN (383 aa). Residues 671 to 861 form the ATP-grasp 2 domain; it reads EKALKELGIP…MAQIATKLIL (191 aa). ATP-binding residues include Arg-707, Ser-746, Ile-748, Glu-752, Gly-777, Val-778, His-779, Ser-780, Gln-820, and Glu-832. Gln-820, Glu-832, and Asn-834 together coordinate Mg(2+). Mn(2+) contacts are provided by Gln-820, Glu-832, and Asn-834. The region spanning 930-1058 is the MGS-like domain; the sequence is SHLSEFGQIV…ESRCFNIEAI (129 aa). The segment at 930-1058 is allosteric domain; that stretch reads SHLSEFGQIV…ESRCFNIEAI (129 aa).

The protein belongs to the CarB family. Composed of two chains; the small (or glutamine) chain promotes the hydrolysis of glutamine to ammonia, which is used by the large (or ammonia) chain to synthesize carbamoyl phosphate. Tetramer of heterodimers (alpha,beta)4. Mg(2+) serves as cofactor. The cofactor is Mn(2+).

It carries out the reaction hydrogencarbonate + L-glutamine + 2 ATP + H2O = carbamoyl phosphate + L-glutamate + 2 ADP + phosphate + 2 H(+). The enzyme catalyses hydrogencarbonate + NH4(+) + 2 ATP = carbamoyl phosphate + 2 ADP + phosphate + 2 H(+). It functions in the pathway amino-acid biosynthesis; L-arginine biosynthesis; carbamoyl phosphate from bicarbonate: step 1/1. The protein operates within pyrimidine metabolism; UMP biosynthesis via de novo pathway; (S)-dihydroorotate from bicarbonate: step 1/3. Large subunit of the glutamine-dependent carbamoyl phosphate synthetase (CPSase). CPSase catalyzes the formation of carbamoyl phosphate from the ammonia moiety of glutamine, carbonate, and phosphate donated by ATP, constituting the first step of 2 biosynthetic pathways, one leading to arginine and/or urea and the other to pyrimidine nucleotides. The large subunit (synthetase) binds the substrates ammonia (free or transferred from glutamine from the small subunit), hydrogencarbonate and ATP and carries out an ATP-coupled ligase reaction, activating hydrogencarbonate by forming carboxy phosphate which reacts with ammonia to form carbamoyl phosphate. The protein is Carbamoyl phosphate synthase large chain of Streptococcus pyogenes serotype M6 (strain ATCC BAA-946 / MGAS10394).